A 205-amino-acid polypeptide reads, in one-letter code: Thymidine kinase (205 aa).

Residues 9-16 (SAMNAGKS) and 87-90 (DESQ) contribute to the ATP site. E88 serves as the catalytic Proton acceptor. Residues C145, C147, C182, and H185 each contribute to the Zn(2+) site.

This sequence belongs to the thymidine kinase family. As to quaternary structure, homotetramer.

It is found in the cytoplasm. The enzyme catalyses thymidine + ATP = dTMP + ADP + H(+). In Salmonella choleraesuis (strain SC-B67), this protein is Thymidine kinase.